Reading from the N-terminus, the 692-residue chain is Elongation factor G (692 aa).

The 275-residue stretch at 8–282 (ENTRNIGIMA…AVIDYLPSPL (275 aa)) folds into the tr-type G domain. Residues 17–24 (AHIDAGKT), 81–85 (DTPGH), and 135–138 (NKMD) contribute to the GTP site.

It belongs to the TRAFAC class translation factor GTPase superfamily. Classic translation factor GTPase family. EF-G/EF-2 subfamily.

It localises to the cytoplasm. Catalyzes the GTP-dependent ribosomal translocation step during translation elongation. During this step, the ribosome changes from the pre-translocational (PRE) to the post-translocational (POST) state as the newly formed A-site-bound peptidyl-tRNA and P-site-bound deacylated tRNA move to the P and E sites, respectively. Catalyzes the coordinated movement of the two tRNA molecules, the mRNA and conformational changes in the ribosome. In Bacillus anthracis (strain CDC 684 / NRRL 3495), this protein is Elongation factor G.